A 427-amino-acid polypeptide reads, in one-letter code: Thyroid hormone receptor alpha-A (427 aa).

Residues Met-1–Pro-11 show a composition bias toward basic and acidic residues. Residues Met-1–Ser-40 form a disordered region. The tract at residues Met-1–Pro-56 is modulating. Residues Ser-29–Ser-40 are compositionally biased toward polar residues. 2 consecutive NR C4-type zinc fingers follow at residues Cys-57–Cys-77 and Cys-95–Cys-119. The nuclear receptor DNA-binding region spans Cys-57–Asp-131. The NR LBD domain maps to Ser-167–Asp-410.

The protein belongs to the nuclear hormone receptor family. NR1 subfamily. As to quaternary structure, interacts with ncoa2. As to expression, after the mid-blastula transition (MBT), expressed throughout the deep cells, which give rise to the embryo proper. In adults, isoform 2 shows highest expression in the eye and liver. Expressed in adult gonads.

The protein resides in the nucleus. In terms of biological role, high affinity receptor for triiodothyronine. In the absence of thyroid hormone during late blastula stage development, acts as a transcriptional repressor. Whereas in the presence of thyroid hormone, can act as an activator of transcription. In addition, represses retinoic acid (RA)-signaling during blastula and gastrula stages of development. This chain is Thyroid hormone receptor alpha-A (thraa), found in Danio rerio (Zebrafish).